Consider the following 220-residue polypeptide: Phosphoenolpyruvate guanylyltransferase (220 aa).

The phosphoenolpyruvate site is built by T154, G169, and S172.

This sequence belongs to the CofC family.

It carries out the reaction phosphoenolpyruvate + GTP + H(+) = enolpyruvoyl-2-diphospho-5'-guanosine + diphosphate. It participates in cofactor biosynthesis; coenzyme F420 biosynthesis. Guanylyltransferase that catalyzes the activation of phosphoenolpyruvate (PEP) as enolpyruvoyl-2-diphospho-5'-guanosine, via the condensation of PEP with GTP. It is involved in the biosynthesis of coenzyme F420, a hydride carrier cofactor. The chain is Phosphoenolpyruvate guanylyltransferase from Mycolicibacterium paratuberculosis (strain ATCC BAA-968 / K-10) (Mycobacterium paratuberculosis).